Reading from the N-terminus, the 179-residue chain is Large ribosomal subunit protein uL5 (179 aa).

The protein belongs to the universal ribosomal protein uL5 family. In terms of assembly, part of the 50S ribosomal subunit; part of the 5S rRNA/L5/L18/L25 subcomplex. Contacts the 5S rRNA and the P site tRNA. Forms a bridge to the 30S subunit in the 70S ribosome.

Functionally, this is one of the proteins that bind and probably mediate the attachment of the 5S RNA into the large ribosomal subunit, where it forms part of the central protuberance. In the 70S ribosome it contacts protein S13 of the 30S subunit (bridge B1b), connecting the 2 subunits; this bridge is implicated in subunit movement. Contacts the P site tRNA; the 5S rRNA and some of its associated proteins might help stabilize positioning of ribosome-bound tRNAs. The sequence is that of Large ribosomal subunit protein uL5 from Lysinibacillus sphaericus (strain C3-41).